A 197-amino-acid polypeptide reads, in one-letter code: Imidazoleglycerol-phosphate dehydratase (197 aa).

The protein belongs to the imidazoleglycerol-phosphate dehydratase family.

It localises to the cytoplasm. The enzyme catalyses D-erythro-1-(imidazol-4-yl)glycerol 3-phosphate = 3-(imidazol-4-yl)-2-oxopropyl phosphate + H2O. It functions in the pathway amino-acid biosynthesis; L-histidine biosynthesis; L-histidine from 5-phospho-alpha-D-ribose 1-diphosphate: step 6/9. The protein is Imidazoleglycerol-phosphate dehydratase of Rhodopseudomonas palustris (strain BisA53).